The chain runs to 335 residues: ATP-dependent 6-phosphofructokinase (335 aa).

Residue Gly-11 participates in ATP binding. An ADP-binding site is contributed by Arg-21–Arg-25. ATP-binding positions include Arg-72 to Tyr-73 and Gly-102 to Ser-105. Asp-103 is a binding site for Mg(2+). Residue Thr-125–Asp-127 coordinates substrate. Asp-127 serves as the catalytic Proton acceptor. An ADP-binding site is contributed by Arg-154. Residues Arg-162 and Met-169–Arg-171 each bind substrate. ADP is bound by residues Gly-185–Asp-187 and Lys-213–His-215. Substrate is bound by residues Glu-222, Arg-244, and His-250–Arg-253.

Belongs to the phosphofructokinase type A (PFKA) family. ATP-dependent PFK group I subfamily. Prokaryotic clade 'B1' sub-subfamily. Homotetramer. Mg(2+) is required as a cofactor.

Its subcellular location is the cytoplasm. The catalysed reaction is beta-D-fructose 6-phosphate + ATP = beta-D-fructose 1,6-bisphosphate + ADP + H(+). It functions in the pathway carbohydrate degradation; glycolysis; D-glyceraldehyde 3-phosphate and glycerone phosphate from D-glucose: step 3/4. Allosterically activated by ADP and other diphosphonucleosides, and allosterically inhibited by phosphoenolpyruvate. In terms of biological role, catalyzes the phosphorylation of D-fructose 6-phosphate to fructose 1,6-bisphosphate by ATP, the first committing step of glycolysis. This Streptococcus pneumoniae serotype 4 (strain ATCC BAA-334 / TIGR4) protein is ATP-dependent 6-phosphofructokinase.